Reading from the N-terminus, the 442-residue chain is MVTLTSSSSTPNVSFDFMMNNNNNSNNLYGPFSSSSTSFSYLTSKEDALTQKNLMSGITNDVLGINKKASEDLEISVFGAEKYFNGDMDSDHSPRLVSPLPDPEVPIERIFVGPKQSSKNSSETPSLRSESSWNSQSLLLQSKYVEKKKNIKKNSSCNSYFQEKDMSSNHKVSNKKSFLATLGCRCVCSNWSSVDVVDDKRRSSGLKKIKTQLSFSGDLSSEMKIHQQQQEAMLEQRKSLEIFGSPLIEKRIIQKKFPWEYSSSAKKEEHGFSVKYEEEEDGSVSDVSTDLFEIESLTGKANPFLARQGSSDPDSPDGYAPSEVSIQWSVVTASVADFSVMSECATSPVKKNRSFQIPRIPIMAKSNREIAPQRRKSSSSGLLMGCKSHKSVRVSGDSYTSMNRTPSYVPRFPVEANPTSTETRRRISSSSVSHTQSPFLYT.

The interval 110 to 130 is disordered; the sequence is IFVGPKQSSKNSSETPSLRSE. Residues 121–130 are compositionally biased toward low complexity; that stretch reads SSETPSLRSE. 2 positions are modified to phosphoserine: S239 and S245. Residues 394–442 are disordered; that stretch reads VSGDSYTSMNRTPSYVPRFPVEANPTSTETRRRISSSSVSHTQSPFLYT. Residues 397-406 are compositionally biased toward polar residues; it reads DSYTSMNRTP. The span at 428–442 shows a compositional bias: low complexity; the sequence is SSSSVSHTQSPFLYT.

It belongs to the PKS family. As to quaternary structure, interacts with PKS1, RPT3, PHOT1 and PHOT2. Expressed in leaves, with the strongest expression on edges of the laminas. Not found in roots.

The protein resides in the cell membrane. Its function is as follows. Acts predominantly in the phot1 pathway. Involved in the leaf positioning and also in the phot2 pathway controlling the leaf flattening. Component of the network that modulates the very low-fluence response (VLFR) branch of phyA signaling. Regulates phytochrome-mediated photomorphogenesis and hypocotyl phototropism. May act by controlling auxin homeostasis. The sequence is that of Protein PHYTOCHROME KINASE SUBSTRATE 2 (PKS2) from Arabidopsis thaliana (Mouse-ear cress).